A 352-amino-acid polypeptide reads, in one-letter code: Thiamine-phosphate synthase (352 aa).

Positions Met-1–Gly-128 are unknown. A disordered region spans residues Ser-63 to Asp-85. The interval Leu-129 to Ile-352 is thiamine-phosphate synthase. 4-amino-2-methyl-5-(diphosphooxymethyl)pyrimidine-binding positions include Gln-180–Lys-184 and Asn-212. Mg(2+)-binding residues include Asp-213 and Asp-232. 2 residues coordinate 4-amino-2-methyl-5-(diphosphooxymethyl)pyrimidine: Ser-251 and Lys-280. Residue Gly-307 coordinates 2-[(2R,5Z)-2-carboxy-4-methylthiazol-5(2H)-ylidene]ethyl phosphate.

It belongs to the thiamine-phosphate synthase family. Requires Mg(2+) as cofactor.

It carries out the reaction 2-[(2R,5Z)-2-carboxy-4-methylthiazol-5(2H)-ylidene]ethyl phosphate + 4-amino-2-methyl-5-(diphosphooxymethyl)pyrimidine + 2 H(+) = thiamine phosphate + CO2 + diphosphate. The catalysed reaction is 2-(2-carboxy-4-methylthiazol-5-yl)ethyl phosphate + 4-amino-2-methyl-5-(diphosphooxymethyl)pyrimidine + 2 H(+) = thiamine phosphate + CO2 + diphosphate. It catalyses the reaction 4-methyl-5-(2-phosphooxyethyl)-thiazole + 4-amino-2-methyl-5-(diphosphooxymethyl)pyrimidine + H(+) = thiamine phosphate + diphosphate. Its pathway is cofactor biosynthesis; thiamine diphosphate biosynthesis; thiamine phosphate from 4-amino-2-methyl-5-diphosphomethylpyrimidine and 4-methyl-5-(2-phosphoethyl)-thiazole: step 1/1. Its function is as follows. Condenses 4-methyl-5-(beta-hydroxyethyl)thiazole monophosphate (THZ-P) and 2-methyl-4-amino-5-hydroxymethyl pyrimidine pyrophosphate (HMP-PP) to form thiamine monophosphate (TMP). In Synechococcus sp. (strain CC9605), this protein is Thiamine-phosphate synthase.